The primary structure comprises 630 residues: A disintegrin and metalloproteinase with thrombospondin motifs 4 (630 aa).

Positions 1–5 are excised as a propeptide; sequence RRTKR. In terms of domain architecture, Peptidase M12B spans 11–221; sequence RFVETLVVAD…GYGHCLLDKP (211 aa). 11 disulfide bridges follow: cysteine 86–cysteine 138, cysteine 115–cysteine 120, cysteine 132–cysteine 216, cysteine 170–cysteine 200, cysteine 242–cysteine 265, cysteine 253–cysteine 275, cysteine 260–cysteine 294, cysteine 288–cysteine 299, cysteine 325–cysteine 362, cysteine 329–cysteine 367, and cysteine 340–cysteine 352. N-linked (GlcNAc...) asparagine glycosylation is present at asparagine 96. Histidine 154 is a Zn(2+) binding site. Glutamate 155 is a catalytic residue. The Zn(2+) site is built by histidine 158 and histidine 164. Residues 233 to 303 enclose the Disintegrin domain; that stretch reads GKDYDADRQC…CMGGRCLHVD (71 aa). A TSP type-1 domain is found at 313–368; that stretch reads AGGWGPWGPWGDCSRTCGGGVQFSSRDCTKPVPRNGGKYCEGRRTPFRSCNTKNCP. Asparagine 474 carries an N-linked (GlcNAc...) asparagine glycan. The interval 479-630 is spacer; that stretch reads SKQSGSFKKF…LRKRTWAGRK (152 aa).

In terms of assembly, interacts with SRPX2. The cofactor is Zn(2+). The precursor is cleaved by a furin endopeptidase. In terms of processing, glycosylated. Can be O-fucosylated by POFUT2 on a serine or a threonine residue found within the consensus sequence C1-X(2)-(S/T)-C2-G of the TSP type-1 repeat domains where C1 and C2 are the first and second cysteine residue of the repeat, respectively. Fucosylated repeats can then be further glycosylated by the addition of a beta-1,3-glucose residue by the glucosyltransferase, B3GALTL. Fucosylation mediates the efficient secretion of ADAMTS family members. Can also be C-glycosylated with one or two mannose molecules on tryptophan residues within the consensus sequence W-X-X-W of the TPRs, and N-glycosylated. These other glycosylations can also facilitate secretion. In terms of tissue distribution, brain specific.

It localises to the secreted. The protein resides in the extracellular space. The protein localises to the extracellular matrix. The catalysed reaction is Glutamyl endopeptidase. Bonds cleaved include 370-Thr-Glu-Gly-Glu-|-Ala-Arg-Gly-Ser-377 in the interglobular domain of mammalian aggrecan.. Cleaves aggrecan, a cartilage proteoglycan, at the '392-Glu-|-Ala-393' site and may be involved in its turnover. Also cleaves COMP. May play an important role in the destruction of aggrecan in arthritic diseases. This is A disintegrin and metalloproteinase with thrombospondin motifs 4 (Adamts4) from Rattus norvegicus (Rat).